The primary structure comprises 272 residues: MMKRQFEDVKRIVIKIGTSSLVLANGKINLEKIDHLAFVISSLMNKGKEVILVSSGAMGFGLDLLKMAKRPSQLAKQQAVSSVGQVAMMSLYSQIFAHYQTTVSQILLTRDVVVFPESLANVTNAFESLISLGIVPIVNENDAVSVDEMDHSTKFGDNDRLSAIVARITRADLLIMLSDIDGLFDKNPTIYEDARLRSHVTEITEDIIASAGGAGSRFGTGGMLSKIQSAQMMFEHQGQMILMNGANPRDILRVLEGEKLGTWFKQIERGDA.

Lys-15 is an ATP binding site. 3 residues coordinate substrate: Ser-55, Asp-142, and Asn-158. ATP-binding positions include 178-179 (SD) and 220-226 (TGGMLSK).

This sequence belongs to the glutamate 5-kinase family.

The protein resides in the cytoplasm. The catalysed reaction is L-glutamate + ATP = L-glutamyl 5-phosphate + ADP. Its pathway is amino-acid biosynthesis; L-proline biosynthesis; L-glutamate 5-semialdehyde from L-glutamate: step 1/2. Its function is as follows. Catalyzes the transfer of a phosphate group to glutamate to form L-glutamate 5-phosphate. The polypeptide is Glutamate 5-kinase (Streptococcus equi subsp. zooepidemicus (strain H70)).